The chain runs to 313 residues: Metal ABC transporter substrate-binding lipoprotein (313 aa).

Positions 1–23 (MIEKYKNILITFIALAAIVFLVG) are cleaved as a signal peptide. The N-palmitoyl cysteine moiety is linked to residue cysteine 24. Cysteine 24 carries the S-diacylglycerol cysteine lipid modification. Zn(2+)-binding residues include histidine 71, histidine 143, glutamate 209, and aspartate 284.

This sequence belongs to the bacterial solute-binding protein 9 family. Lipoprotein receptor antigen (Lrai) subfamily.

It localises to the cell membrane. Part of an ATP-driven transport system for a metal; probably for manganese. The protein is Metal ABC transporter substrate-binding lipoprotein (mtsA) of Lactococcus lactis subsp. lactis (strain IL1403) (Streptococcus lactis).